The sequence spans 865 residues: ABC transporter ATP-binding/permease protein Rv1747 (865 aa).

The FHA 1 domain occupies 29–78 (VVVGRDLRADVRVAHPLISRAHLLLRFDQGRWVAIDNGSLNGLYLNNRRV). The tract at residues 104 to 205 (GRHRGSAGRP…PAGARGGTEA (102 aa)) is disordered. A compositionally biased stretch (low complexity) spans 135-156 (PQTGTLGSGQLQQLPPATTRIP). Thr-152 carries the phosphothreonine modification. The segment covering 157–166 (AAPPSGPQPR) has biased composition (pro residues). Thr-210 is subject to Phosphothreonine. An FHA 2 domain is found at 230–279 (VRIGRANDNDIVIPEVLASRHHATLVPTPGGTEIRDNRSINGTFVNGARV). An ABC transporter domain is found at 319 to 552 (LDVRGVTWTI…VMGTTNWADI (234 aa)). Residue 352–359 (GPSGAGKS) coordinates ATP. Residues 596–810 (RQFSTIARRQ…TPARWGFAAS (215 aa)) form the ABC transmembrane type-2 domain. 6 consecutive transmembrane segments (helical) span residues 614-634 (GYFV…MSVP), 652-672 (PGQI…ALTI), 700-720 (VCVY…IVLV), 740-760 (FVDV…LSAI), 767-787 (IMPL…GMIP), and 836-856 (SAWW…VGFV).

The protein in the central section; belongs to the ABC transporter superfamily. This sequence in the C-terminal section; belongs to the ABC-2 integral membrane protein family. In terms of assembly, homodimer. Interacts with PknF. Post-translationally, phosphorylated by PknF. Can probably be phosphorylated in vivo by other kinases when PknF is missing.

It is found in the cell membrane. Its activity is regulated as follows. Function is positively regulated by phosphorylation. In terms of biological role, involved in the translocation of an unknown substrate across the membrane. Transmembrane domains (TMD) form a pore in the membrane and the ATP-binding domain (NBD) is responsible for energy generation. Required for virulence. This Mycobacterium tuberculosis (strain ATCC 25618 / H37Rv) protein is ABC transporter ATP-binding/permease protein Rv1747.